A 570-amino-acid chain; its full sequence is Methionine--tRNA ligase (570 aa).

The short motif at 11 to 21 is the 'HIGH' region element; it reads PYVQTVPHLGN. Residues C143, C146, C156, and C159 each contribute to the Zn(2+) site. Positions 333–337 match the 'KMSKS' region motif; it reads KFSKS. K336 is an ATP binding site.

The protein belongs to the class-I aminoacyl-tRNA synthetase family. MetG type 1 subfamily. Zn(2+) is required as a cofactor.

It localises to the cytoplasm. It catalyses the reaction tRNA(Met) + L-methionine + ATP = L-methionyl-tRNA(Met) + AMP + diphosphate. Is required not only for elongation of protein synthesis but also for the initiation of all mRNA translation through initiator tRNA(fMet) aminoacylation. This is Methionine--tRNA ligase from Pyrobaculum arsenaticum (strain DSM 13514 / JCM 11321 / PZ6).